Here is a 305-residue protein sequence, read N- to C-terminus: Acetyl-coenzyme A carboxylase carboxyl transferase subunit beta (305 aa).

The region spanning 25–294 (VWTKCDSCGQ…PGNDDVEIRS (270 aa)) is the CoA carboxyltransferase N-terminal domain. Cys-29, Cys-32, Cys-48, and Cys-51 together coordinate Zn(2+). The C4-type zinc finger occupies 29-51 (CDSCGQVLYRAELERNLGVCPKC). The segment at 281–305 (NHPEPGNDDVEIRSDAPSESSQDDA) is disordered.

It belongs to the AccD/PCCB family. Acetyl-CoA carboxylase is a heterohexamer composed of biotin carboxyl carrier protein (AccB), biotin carboxylase (AccC) and two subunits each of ACCase subunit alpha (AccA) and ACCase subunit beta (AccD). Zn(2+) is required as a cofactor.

The protein resides in the cytoplasm. It catalyses the reaction N(6)-carboxybiotinyl-L-lysyl-[protein] + acetyl-CoA = N(6)-biotinyl-L-lysyl-[protein] + malonyl-CoA. The protein operates within lipid metabolism; malonyl-CoA biosynthesis; malonyl-CoA from acetyl-CoA: step 1/1. Functionally, component of the acetyl coenzyme A carboxylase (ACC) complex. Biotin carboxylase (BC) catalyzes the carboxylation of biotin on its carrier protein (BCCP) and then the CO(2) group is transferred by the transcarboxylase to acetyl-CoA to form malonyl-CoA. The chain is Acetyl-coenzyme A carboxylase carboxyl transferase subunit beta from Pectobacterium atrosepticum (strain SCRI 1043 / ATCC BAA-672) (Erwinia carotovora subsp. atroseptica).